Consider the following 356-residue polypeptide: S-adenosylmethionine:tRNA ribosyltransferase-isomerase (356 aa).

Belongs to the QueA family. Monomer.

It localises to the cytoplasm. The catalysed reaction is 7-aminomethyl-7-carbaguanosine(34) in tRNA + S-adenosyl-L-methionine = epoxyqueuosine(34) in tRNA + adenine + L-methionine + 2 H(+). Its pathway is tRNA modification; tRNA-queuosine biosynthesis. Its function is as follows. Transfers and isomerizes the ribose moiety from AdoMet to the 7-aminomethyl group of 7-deazaguanine (preQ1-tRNA) to give epoxyqueuosine (oQ-tRNA). This Xanthomonas campestris pv. campestris (strain B100) protein is S-adenosylmethionine:tRNA ribosyltransferase-isomerase.